The following is a 149-amino-acid chain: General odorant-binding protein 57c (149 aa).

Positions 1 to 16 (MLKLWLICILTVSVVS) are cleaved as a signal peptide. Cystine bridges form between cysteine 32–cysteine 70, cysteine 66–cysteine 117, and cysteine 106–cysteine 126.

This sequence belongs to the PBP/GOBP family.

Its function is as follows. Present in the aqueous fluid surrounding olfactory sensory dendrites and are thought to aid in the capture and transport of hydrophobic odorants into and through this fluid. This is General odorant-binding protein 57c from Drosophila melanogaster (Fruit fly).